Consider the following 497-residue polypeptide: Probable cytosol aminopeptidase (497 aa).

2 residues coordinate Mn(2+): K267 and D272. The active site involves K279. D290, D349, and E351 together coordinate Mn(2+). R353 is a catalytic residue.

It belongs to the peptidase M17 family. Requires Mn(2+) as cofactor.

It is found in the cytoplasm. The catalysed reaction is Release of an N-terminal amino acid, Xaa-|-Yaa-, in which Xaa is preferably Leu, but may be other amino acids including Pro although not Arg or Lys, and Yaa may be Pro. Amino acid amides and methyl esters are also readily hydrolyzed, but rates on arylamides are exceedingly low.. It catalyses the reaction Release of an N-terminal amino acid, preferentially leucine, but not glutamic or aspartic acids.. In terms of biological role, presumably involved in the processing and regular turnover of intracellular proteins. Catalyzes the removal of unsubstituted N-terminal amino acids from various peptides. In Pseudomonas putida (strain GB-1), this protein is Probable cytosol aminopeptidase.